We begin with the raw amino-acid sequence, 223 residues long: Type III pantothenate kinase (223 aa).

17–24 (DIGNTHIH) provides a ligand contact to ATP. Substrate contacts are provided by residues Y81 and 85–88 (GIDR). The active-site Proton acceptor is the D87. D102 is a K(+) binding site. S105 serves as a coordination point for ATP. T157 contributes to the substrate binding site.

It belongs to the type III pantothenate kinase family. As to quaternary structure, homodimer. The cofactor is NH4(+). Requires K(+) as cofactor.

It is found in the cytoplasm. It carries out the reaction (R)-pantothenate + ATP = (R)-4'-phosphopantothenate + ADP + H(+). The protein operates within cofactor biosynthesis; coenzyme A biosynthesis; CoA from (R)-pantothenate: step 1/5. Its function is as follows. Catalyzes the phosphorylation of pantothenate (Pan), the first step in CoA biosynthesis. The polypeptide is Type III pantothenate kinase (Helicobacter pylori (strain HPAG1)).